The sequence spans 123 residues: Protein LLP homolog (123 aa).

Residues 1 to 21 (MAKSIRSKWKRKMRAEKRKKN) show a composition bias toward basic residues. Disordered stretches follow at residues 1-23 (MAKS…KNAP) and 55-123 (KINE…KLAW). Residues 70-89 (DSSKMDMELKRNKKNLRDQH) are compositionally biased toward basic and acidic residues. A compositionally biased stretch (basic residues) spans 100-123 (QQKKLKSQCGKKKGKSKQAKKLAW).

It belongs to the learning-associated protein family.

It is found in the nucleus. The protein localises to the nucleolus. Its subcellular location is the chromosome. Regulates dendritic and spine growth and synaptic transmission. The chain is Protein LLP homolog (llph) from Xenopus tropicalis (Western clawed frog).